The sequence spans 400 residues: Aspartate/prephenate aminotransferase (400 aa).

Residues glycine 39, tryptophan 125, and asparagine 175 each contribute to the L-aspartate site. Lysine 239 is modified (N6-(pyridoxal phosphate)lysine). L-aspartate is bound at residue arginine 375.

Belongs to the class-I pyridoxal-phosphate-dependent aminotransferase family. Homodimer. Pyridoxal 5'-phosphate is required as a cofactor.

It is found in the cytoplasm. The enzyme catalyses L-aspartate + 2-oxoglutarate = oxaloacetate + L-glutamate. The catalysed reaction is L-arogenate + 2-oxoglutarate = prephenate + L-glutamate. Functionally, catalyzes the reversible conversion of aspartate and 2-oxoglutarate to glutamate and oxaloacetate. Can also transaminate prephenate in the presence of glutamate. The protein is Aspartate/prephenate aminotransferase of Cereibacter sphaeroides (strain ATCC 17029 / ATH 2.4.9) (Rhodobacter sphaeroides).